The chain runs to 123 residues: Small ribosomal subunit protein uS12c (123 aa).

The protein belongs to the universal ribosomal protein uS12 family. In terms of assembly, part of the 30S ribosomal subunit.

Its subcellular location is the plastid. The protein resides in the chloroplast. In terms of biological role, with S4 and S5 plays an important role in translational accuracy. Located at the interface of the 30S and 50S subunits. In Physcomitrium patens (Spreading-leaved earth moss), this protein is Small ribosomal subunit protein uS12c (rps12).